The primary structure comprises 315 residues: Lipoyl synthase (315 aa).

Residues cysteine 62, cysteine 67, cysteine 73, cysteine 88, cysteine 92, cysteine 95, and serine 302 each contribute to the [4Fe-4S] cluster site. Residues 74-291 (FGKGTATFMI…ETEALAMGFK (218 aa)) form the Radical SAM core domain.

It belongs to the radical SAM superfamily. Lipoyl synthase family. It depends on [4Fe-4S] cluster as a cofactor.

It is found in the cytoplasm. The catalysed reaction is [[Fe-S] cluster scaffold protein carrying a second [4Fe-4S](2+) cluster] + N(6)-octanoyl-L-lysyl-[protein] + 2 oxidized [2Fe-2S]-[ferredoxin] + 2 S-adenosyl-L-methionine + 4 H(+) = [[Fe-S] cluster scaffold protein] + N(6)-[(R)-dihydrolipoyl]-L-lysyl-[protein] + 4 Fe(3+) + 2 hydrogen sulfide + 2 5'-deoxyadenosine + 2 L-methionine + 2 reduced [2Fe-2S]-[ferredoxin]. Its pathway is protein modification; protein lipoylation via endogenous pathway; protein N(6)-(lipoyl)lysine from octanoyl-[acyl-carrier-protein]: step 2/2. Functionally, catalyzes the radical-mediated insertion of two sulfur atoms into the C-6 and C-8 positions of the octanoyl moiety bound to the lipoyl domains of lipoate-dependent enzymes, thereby converting the octanoylated domains into lipoylated derivatives. In Aromatoleum aromaticum (strain DSM 19018 / LMG 30748 / EbN1) (Azoarcus sp. (strain EbN1)), this protein is Lipoyl synthase.